Consider the following 152-residue polypeptide: Large ribosomal subunit protein bL9 (152 aa).

Belongs to the bacterial ribosomal protein bL9 family.

Functionally, binds to the 23S rRNA. In Coxiella burnetii (strain Dugway 5J108-111), this protein is Large ribosomal subunit protein bL9.